We begin with the raw amino-acid sequence, 551 residues long: Glucose-6-phosphate isomerase (551 aa).

The Proton donor role is filled by Glu352. Residues His383 and Lys511 contribute to the active site.

This sequence belongs to the GPI family.

It is found in the cytoplasm. It carries out the reaction alpha-D-glucose 6-phosphate = beta-D-fructose 6-phosphate. Its pathway is carbohydrate biosynthesis; gluconeogenesis. It participates in carbohydrate degradation; glycolysis; D-glyceraldehyde 3-phosphate and glycerone phosphate from D-glucose: step 2/4. Catalyzes the reversible isomerization of glucose-6-phosphate to fructose-6-phosphate. This chain is Glucose-6-phosphate isomerase, found in Chlorobium luteolum (strain DSM 273 / BCRC 81028 / 2530) (Pelodictyon luteolum).